A 503-amino-acid chain; its full sequence is ATP synthase subunit alpha (503 aa).

Residue 170–177 (GDKQTGKT) coordinates ATP.

Belongs to the ATPase alpha/beta chains family. In terms of assembly, F-type ATPases have 2 components, CF(1) - the catalytic core - and CF(0) - the membrane proton channel. CF(1) has five subunits: alpha(3), beta(3), gamma(1), delta(1), epsilon(1). CF(0) has three main subunits: a(1), b(2) and c(9-12). The alpha and beta chains form an alternating ring which encloses part of the gamma chain. CF(1) is attached to CF(0) by a central stalk formed by the gamma and epsilon chains, while a peripheral stalk is formed by the delta and b chains.

Its subcellular location is the cell inner membrane. The enzyme catalyses ATP + H2O + 4 H(+)(in) = ADP + phosphate + 5 H(+)(out). Produces ATP from ADP in the presence of a proton gradient across the membrane. The alpha chain is a regulatory subunit. This chain is ATP synthase subunit alpha, found in Helicobacter pylori (strain J99 / ATCC 700824) (Campylobacter pylori J99).